Reading from the N-terminus, the 862-residue chain is MAQPGPAPQPDVSLQQRVAELEKINAEFLRAQQQLEQEFNQKRAKFKELYLAKEEDLKRQNAVLQAAQDDLGHLRTQLWEAQAEMENIKAIATVSENTKQEAIDEVKRQWREEVASLQAIMKETVRDYEHQFHLRLEQERAQWAQYRESAEREIADLRRRLSEGQEEENLENEMKKAQEDAEKLRSVVMPMEKEIAALKDKLTEAEDKIKELEASKVKELNHYLEAEKSCRTDLEMYVAVLNTQKSVLQEDAEKLRKELHEVCHLLEQERQQHNQLKHTWQKANDQFLESQRLLMRDMQRMEIVLTSEQLRQVEELKKKDQEEDEQQRVNKRKDNKKTDTEEEVKIPVVCALTQEESSTPLSNEEEHLDSTHGSVHSLDADLMLPSGDPFSKSDNDMFKDGLRRAQSTDSLGTSSSLQSKALGYNYKAKSAGNLDESDFGPLVGADSVSENFDTVSLGSLQMPSGFMLTKDQERAIKAMTPEQEETASLLSSVTQGMESAYVSPSGYRLVSETEWNLLQKEVHNAGNKLGRRCDMCSNYEKQLQGIQIQEAETRDQVKKLQLMLRQANDQLEKTMKEKQELEDFLKQSAEDSSHQISALVLRAQASEVLLEELQQSFSQAKRDVQEQMAVLMQSREQVSEELVRLQKDNDSLQGKHSLHVSLQLAEDFILPDTVEVLRELVLKYRENIVHVRTAADHMEEKLKAEILFLKEQIQAEQCLKENLEETLQLEIENCKEEIASISSLKAELERIKVEKGQLESTLREKSQQLESLQEMKVNLEEQLKKETAAKATVEQLMFEEKNKAQRLQTELDVSEQVQRDFVKLSQTLQVQLERIRQADSLERIRAILNDTKLTDINQLPET.

At Ala2 the chain carries N-acetylalanine. Residues 11 to 345 adopt a coiled-coil conformation; that stretch reads DVSLQQRVAE…KKTDTEEEVK (335 aa). The residue at position 282 (Lys282) is an N6-acetyllysine. The tract at residues 315 to 374 is disordered; the sequence is ELKKKDQEEDEQQRVNKRKDNKKTDTEEEVKIPVVCALTQEESSTPLSNEEEHLDSTHGS. Residues 336-345 are compositionally biased toward basic and acidic residues; the sequence is KKTDTEEEVK. Ser374, Ser377, and Ser407 each carry phosphoserine. At Thr408 the chain carries Phosphothreonine. Ser410 carries the phosphoserine modification. Residues 534–816 are a coiled coil; that stretch reads DMCSNYEKQL…LQTELDVSEQ (283 aa).

It belongs to the rabaptin family. As to quaternary structure, heterodimer with RABGEF1. The heterodimer binds RAB4A and RAB5A that have been activated by GTP-binding. Interacts with TSC2. Interacts with GGA1 (via GAE domain), GGA2 (via GAE domain) and GGA3 (via GAE domain). Interacts with AP1G1 (via GAE domain). Interacts with AP1G2 (via GAE domain). Interacts with ECPAS. Interacts with KCNH1. Interacts with PKD1 (via C-terminal domain) and GGA1; the interactions recruit PKD1:PKD2 complex to GGA1 and ARL3 at trans-Golgi network. Interacts with KCNH1. In terms of processing, proteolytic cleavage by caspases in apoptotic cells causes loss of endosome fusion activity.

It is found in the cytoplasm. The protein resides in the early endosome. It localises to the recycling endosome. The protein localises to the cytoplasmic vesicle. Functionally, rab effector protein acting as linker between gamma-adaptin, RAB4A and RAB5A. Involved in endocytic membrane fusion and membrane trafficking of recycling endosomes. Involved in KCNH1 channels trafficking to and from the cell membrane. Stimulates RABGEF1 mediated nucleotide exchange on RAB5A. Mediates the traffic of PKD1:PKD2 complex from the endoplasmic reticulum through the Golgi to the cilium. This is Rab GTPase-binding effector protein 1 (Rabep1) from Mus musculus (Mouse).